We begin with the raw amino-acid sequence, 395 residues long: Inner membrane protein YjgN (395 aa).

Residues 1 to 24 (MNNVISSKDNHNHTLVFTGKGGKY) are Cytoplasmic-facing. Residues 25-45 (FVICLVNFLLTCITLGIYAPW) form a helical membrane-spanning segment. At 46 to 71 (AMVKCRRYIYTNMTLNNQPFAYKATG) the chain is on the periplasmic side. A helical membrane pass occupies residues 72-92 (GALFISVLLVFIIYIVSLSLI). The Cytoplasmic segment spans residues 93-95 (EHG). A helical membrane pass occupies residues 96–116 (HPGLGFTLFGLLIAIIPFMAV). The Periplasmic segment spans residues 117–146 (KGLQYQAMMTSLNGVHFGFQCSMRRAWWYM). The helical transmembrane segment at 147 to 167 (FALPVLLMVALYIVLYIISLV) threads the bilayer. Residue Thr-168 is a topological domain, cytoplasmic. Residues 169-189 (IAVGGLVFSIVFLGLLAIIGI) form a helical membrane-spanning segment. The Periplasmic segment spans residues 190–229 (GVINGITYSKWMTLFGNGANFGIHRFSIQVNVKTCIRGCV). The helical transmembrane segment at 230 to 250 (LAMLTLFPFAVVIGYLIAPVF) threads the bilayer. Topologically, residues 251–275 (TDMILLSMMGNAQAGGALILQYYGQ) are cytoplasmic. A helical transmembrane segment spans residues 276-296 (IMACYFLYFLAIIVVTSYLYV). Topologically, residues 297-327 (ALRNLFLNNLSLANDSIRFHSSVTAHGMLWR) are periplasmic. The helical transmembrane segment at 328-348 (LLVVFVISGVTLGLAYPWLKI) threads the bilayer. Topologically, residues 349–395 (WLVSWLAQNTQVQGDLDSLELTNDEKPLENSPLMWISRGIMPYFPFI) are cytoplasmic.

It localises to the cell inner membrane. The protein is Inner membrane protein YjgN (yjgN) of Salmonella typhimurium (strain LT2 / SGSC1412 / ATCC 700720).